We begin with the raw amino-acid sequence, 246 residues long: Probable aquaporin AqpM (246 aa).

The Cytoplasmic segment spans residues 1-12; the sequence is MTMTLAKRFTAE. Residues 13–33 traverse the membrane as a helical segment; sequence VVGTFILVFFGPGAAVITLMI. Residues 34–56 are Extracellular-facing; the sequence is ANGADKPNEFNIGIGALGGLGDW. The chain crosses the membrane as a helical span at residues 57–77; it reads FAIGMAFALAIAAVIYSLGRI. Topologically, residues 78 to 104 are cytoplasmic; the sequence is SGAHINPAVTIALWSIGRFPGREVVPY. Positions 83-85 match the NPA 1 motif; sequence NPA. Residues 105-125 traverse the membrane as a helical segment; sequence IVAQFIGAALGSLLFLACVGP. Over 126 to 146 the chain is Extracellular; that stretch reads AAATVGGLGATAPFPGIGYGQ. The chain crosses the membrane as a helical span at residues 147-167; it reads AILTEAIGTFLLMLVIMGVAV. At 168–173 the chain is on the cytoplasmic side; that stretch reads DERAPP. The helical transmembrane segment at 174–194 threads the bilayer; that stretch reads GFAGLVIGLTVGGIITTIGNI. The Extracellular segment spans residues 195-217; sequence TGSSLNPARTFGPYLGDSLMGIN. Residues 200–202 carry the NPA 2 motif; it reads NPA. A helical transmembrane segment spans residues 218 to 238; sequence LWQYFPIYVIGPIVGAVAAAW. Residues 239 to 246 lie on the Cytoplasmic side of the membrane; sequence LYNYLAKE.

The protein belongs to the MIP/aquaporin (TC 1.A.8) family.

It localises to the cell membrane. Channel that permits osmotically driven movement of water in both directions. The chain is Probable aquaporin AqpM (aqpM) from Archaeoglobus fulgidus (strain ATCC 49558 / DSM 4304 / JCM 9628 / NBRC 100126 / VC-16).